Consider the following 305-residue polypeptide: Large ribosomal subunit protein uL3c (305 aa).

The N-terminal 84 residues, 1-84, are a transit peptide targeting the chloroplast; that stretch reads MAAILPTFSI…AVGGLEIKMM (84 aa). The segment at 228–256 is disordered; sequence SHRALGSIGAGTTPGHVYKGKKMPGRMGG.

As to quaternary structure, component of the chloroplast large ribosomal subunit (LSU). Mature 70S chloroplast ribosomes of higher plants consist of a small (30S) and a large (50S) subunit. The 30S small subunit contains 1 molecule of ribosomal RNA (16S rRNA) and 24 different proteins. The 50S large subunit contains 3 rRNA molecules (23S, 5S and 4.5S rRNA) and 33 different proteins.

It localises to the plastid. The protein resides in the chloroplast. In terms of biological role, component of the chloroplast ribosome (chloro-ribosome), a dedicated translation machinery responsible for the synthesis of chloroplast genome-encoded proteins, including proteins of the transcription and translation machinery and components of the photosynthetic apparatus. This is Large ribosomal subunit protein uL3c (RPL3) from Spinacia oleracea (Spinach).